A 445-amino-acid polypeptide reads, in one-letter code: GTPase Der (445 aa).

2 consecutive EngA-type G domains span residues 3–167 (PVIA…YAGQ) and 180–353 (IKIA…AAAM). Residues 9–16 (GRPNVGKS), 56–60 (DTGGF), 119–122 (NKAE), 186–193 (GRPNVGKS), 233–237 (DTAGL), and 298–301 (NKWD) contribute to the GTP site. Positions 354-438 (AKLPTPKLTR…PLRIEFRSSN (85 aa)) constitute a KH-like domain.

This sequence belongs to the TRAFAC class TrmE-Era-EngA-EngB-Septin-like GTPase superfamily. EngA (Der) GTPase family. As to quaternary structure, associates with the 50S ribosomal subunit.

Functionally, GTPase that plays an essential role in the late steps of ribosome biogenesis. This chain is GTPase Der, found in Burkholderia ambifaria (strain MC40-6).